A 239-amino-acid polypeptide reads, in one-letter code: Carboxy-S-adenosyl-L-methionine synthase (239 aa).

S-adenosyl-L-methionine contacts are provided by residues Tyr-35, 64–66 (GCS), 88–89 (DN), and Arg-195.

This sequence belongs to the class I-like SAM-binding methyltransferase superfamily. Cx-SAM synthase family. Homodimer.

It carries out the reaction prephenate + S-adenosyl-L-methionine = carboxy-S-adenosyl-L-methionine + 3-phenylpyruvate + H2O. Catalyzes the conversion of S-adenosyl-L-methionine (SAM) to carboxy-S-adenosyl-L-methionine (Cx-SAM). The polypeptide is Carboxy-S-adenosyl-L-methionine synthase (Helicobacter pylori (strain HPAG1)).